Reading from the N-terminus, the 376-residue chain is Erythronate-4-phosphate dehydrogenase (376 aa).

Positions 45 and 67 each coordinate substrate. Residue D147 coordinates NAD(+). The active site involves R209. D233 contributes to the NAD(+) binding site. E238 is a catalytic residue. The active-site Proton donor is the H255. G258 serves as a coordination point for NAD(+). Y259 lines the substrate pocket.

Belongs to the D-isomer specific 2-hydroxyacid dehydrogenase family. PdxB subfamily. In terms of assembly, homodimer.

It localises to the cytoplasm. It catalyses the reaction 4-phospho-D-erythronate + NAD(+) = (R)-3-hydroxy-2-oxo-4-phosphooxybutanoate + NADH + H(+). The protein operates within cofactor biosynthesis; pyridoxine 5'-phosphate biosynthesis; pyridoxine 5'-phosphate from D-erythrose 4-phosphate: step 2/5. Catalyzes the oxidation of erythronate-4-phosphate to 3-hydroxy-2-oxo-4-phosphonooxybutanoate. The polypeptide is Erythronate-4-phosphate dehydrogenase (Shewanella baltica (strain OS185)).